The following is a 363-amino-acid chain: UDP-N-acetylglucosamine--N-acetylmuramyl-(pentapeptide) pyrophosphoryl-undecaprenol N-acetylglucosamine transferase (363 aa).

UDP-N-acetyl-alpha-D-glucosamine is bound by residues 16 to 18 (TGG), Asn-128, Arg-167, Ser-195, Ile-249, 268 to 273 (ALTVSE), and Gln-294.

The protein belongs to the glycosyltransferase 28 family. MurG subfamily.

The protein localises to the cell inner membrane. The enzyme catalyses di-trans,octa-cis-undecaprenyl diphospho-N-acetyl-alpha-D-muramoyl-L-alanyl-D-glutamyl-meso-2,6-diaminopimeloyl-D-alanyl-D-alanine + UDP-N-acetyl-alpha-D-glucosamine = di-trans,octa-cis-undecaprenyl diphospho-[N-acetyl-alpha-D-glucosaminyl-(1-&gt;4)]-N-acetyl-alpha-D-muramoyl-L-alanyl-D-glutamyl-meso-2,6-diaminopimeloyl-D-alanyl-D-alanine + UDP + H(+). Its pathway is cell wall biogenesis; peptidoglycan biosynthesis. In terms of biological role, cell wall formation. Catalyzes the transfer of a GlcNAc subunit on undecaprenyl-pyrophosphoryl-MurNAc-pentapeptide (lipid intermediate I) to form undecaprenyl-pyrophosphoryl-MurNAc-(pentapeptide)GlcNAc (lipid intermediate II). This chain is UDP-N-acetylglucosamine--N-acetylmuramyl-(pentapeptide) pyrophosphoryl-undecaprenol N-acetylglucosamine transferase, found in Marinobacter nauticus (strain ATCC 700491 / DSM 11845 / VT8) (Marinobacter aquaeolei).